The following is a 397-amino-acid chain: Enoyl-[acyl-carrier-protein] reductase [NADH] (397 aa).

NAD(+) contacts are provided by residues 48 to 53 (GASTGY), 74 to 75 (FE), 111 to 112 (DA), and 139 to 140 (VA). Position 225 (Y225) interacts with substrate. The active-site Proton donor is Y235. NAD(+) is bound by residues K244 and 273–275 (VVT).

It belongs to the TER reductase family. In terms of assembly, monomer.

The enzyme catalyses a 2,3-saturated acyl-[ACP] + NAD(+) = a (2E)-enoyl-[ACP] + NADH + H(+). Its pathway is lipid metabolism; fatty acid biosynthesis. Its function is as follows. Involved in the final reduction of the elongation cycle of fatty acid synthesis (FAS II). Catalyzes the reduction of a carbon-carbon double bond in an enoyl moiety that is covalently linked to an acyl carrier protein (ACP). This chain is Enoyl-[acyl-carrier-protein] reductase [NADH], found in Burkholderia pseudomallei (strain 1106a).